Here is a 179-residue protein sequence, read N- to C-terminus: Small ribosomal subunit protein uS5 (179 aa).

Residues 22–85 enclose the S5 DRBM domain; the sequence is MIEKLVAVNR…EYARKTMANV (64 aa).

This sequence belongs to the universal ribosomal protein uS5 family. Part of the 30S ribosomal subunit. Contacts proteins S4 and S8.

Functionally, with S4 and S12 plays an important role in translational accuracy. In terms of biological role, located at the back of the 30S subunit body where it stabilizes the conformation of the head with respect to the body. The polypeptide is Small ribosomal subunit protein uS5 (Xylella fastidiosa (strain 9a5c)).